We begin with the raw amino-acid sequence, 161 residues long: Regulator of ribonuclease activity A (161 aa).

The protein belongs to the RraA family. In terms of assembly, homotrimer. Binds to both RNA-binding sites in the C-terminal region of Rne and to RhlB.

Its subcellular location is the cytoplasm. In terms of biological role, globally modulates RNA abundance by binding to RNase E (Rne) and regulating its endonucleolytic activity. Can modulate Rne action in a substrate-dependent manner by altering the composition of the degradosome. Modulates RNA-binding and helicase activities of the degradosome. The chain is Regulator of ribonuclease activity A from Photobacterium profundum (strain SS9).